Reading from the N-terminus, the 655-residue chain is p-hydroxybenzoic acid efflux pump subunit AaeB (655 aa).

11 helical membrane-spanning segments follow: residues 13–33, 38–58, 69–89, 93–113, 121–141, 152–172, 370–390, 407–427, 431–451, 459–479, and 482–502; these read FAVKLACAIVLALFIGFHFQL, WAVLTAAIVAAGPAFAAGGEP, LRIIGTFIGCIAALIIIISMI, LLMILVCCVWAGFCTWISSLV, WGLSGYTALIIVITIQTEPLL, EIVIGIGCAILADLLFSPRSI, LFWLWTGWTSGNGAMVMIAVV, FIYGTLAALPLGLLYFLVIIP, QSMLLLCLSLAVLGFFIGIEV, MGALASTINIIVLDNPMTFHF, and FLDSALGQIVGCMLAFIVILL.

Belongs to the aromatic acid exporter ArAE (TC 2.A.85) family.

Its subcellular location is the cell inner membrane. In terms of biological role, forms an efflux pump with AaeA. Could function as a metabolic relief valve, allowing to eliminate certain compounds when they accumulate to high levels in the cell. This is p-hydroxybenzoic acid efflux pump subunit AaeB from Salmonella agona (strain SL483).